We begin with the raw amino-acid sequence, 862 residues long: Protein translocase subunit SecA (862 aa).

ATP is bound by residues Gln-86, 104–108 (GEGKT), and Asp-499. Zn(2+)-binding residues include Cys-848, Cys-850, Cys-859, and His-860.

Belongs to the SecA family. In terms of assembly, monomer and homodimer. Part of the essential Sec protein translocation apparatus which comprises SecA, SecYEG and auxiliary proteins SecDF-YajC and YidC. Requires Zn(2+) as cofactor.

The protein localises to the cell inner membrane. It localises to the cytoplasm. The catalysed reaction is ATP + H2O + cellular proteinSide 1 = ADP + phosphate + cellular proteinSide 2.. Its function is as follows. Part of the Sec protein translocase complex. Interacts with the SecYEG preprotein conducting channel. Has a central role in coupling the hydrolysis of ATP to the transfer of proteins into and across the cell membrane, serving both as a receptor for the preprotein-SecB complex and as an ATP-driven molecular motor driving the stepwise translocation of polypeptide chains across the membrane. This Ehrlichia chaffeensis (strain ATCC CRL-10679 / Arkansas) protein is Protein translocase subunit SecA.